A 1319-amino-acid chain; its full sequence is DNA-directed RNA polymerase subunit beta' (1319 aa).

Zn(2+) contacts are provided by Cys-59, Cys-61, Cys-74, and Cys-77. Mg(2+)-binding residues include Asp-449, Asp-451, and Asp-453. Positions 773, 846, 853, and 856 each coordinate Zn(2+).

It belongs to the RNA polymerase beta' chain family. In terms of assembly, the RNAP catalytic core consists of 2 alpha, 1 beta, 1 beta' and 1 omega subunit. When a sigma factor is associated with the core the holoenzyme is formed, which can initiate transcription. Requires Mg(2+) as cofactor. It depends on Zn(2+) as a cofactor.

The catalysed reaction is RNA(n) + a ribonucleoside 5'-triphosphate = RNA(n+1) + diphosphate. DNA-dependent RNA polymerase catalyzes the transcription of DNA into RNA using the four ribonucleoside triphosphates as substrates. This is DNA-directed RNA polymerase subunit beta' from Fusobacterium nucleatum subsp. nucleatum (strain ATCC 25586 / DSM 15643 / BCRC 10681 / CIP 101130 / JCM 8532 / KCTC 2640 / LMG 13131 / VPI 4355).